Consider the following 186-residue polypeptide: Tumor necrosis factor, alpha-induced protein 8-like protein 2 A (186 aa).

The protein belongs to the TNFAIP8 family. TNFAIP8L2 subfamily.

Functionally, acts as a negative regulator of innate and adaptive immunity by maintaining immune homeostasis. Negative regulator of Toll-like receptor and T-cell receptor function. Prevents hyperresponsiveness of the immune system and maintains immune homeostasis. Inhibits jun/ap1 and NF-kappa-B activation. Promotes Fas-induced apoptosis. The chain is Tumor necrosis factor, alpha-induced protein 8-like protein 2 A (tnfaip8l2a) from Danio rerio (Zebrafish).